A 272-amino-acid chain; its full sequence is Ribosomal RNA small subunit methyltransferase A (272 aa).

The S-adenosyl-L-methionine site is built by Asn18, Leu20, Gly45, Glu66, Asp91, and Asn113.

The protein belongs to the class I-like SAM-binding methyltransferase superfamily. rRNA adenine N(6)-methyltransferase family. RsmA subfamily.

The protein resides in the cytoplasm. The catalysed reaction is adenosine(1518)/adenosine(1519) in 16S rRNA + 4 S-adenosyl-L-methionine = N(6)-dimethyladenosine(1518)/N(6)-dimethyladenosine(1519) in 16S rRNA + 4 S-adenosyl-L-homocysteine + 4 H(+). Specifically dimethylates two adjacent adenosines (A1518 and A1519) in the loop of a conserved hairpin near the 3'-end of 16S rRNA in the 30S particle. May play a critical role in biogenesis of 30S subunits. This is Ribosomal RNA small subunit methyltransferase A from Yersinia pestis bv. Antiqua (strain Antiqua).